The chain runs to 334 residues: Phosphate acyltransferase (334 aa).

Belongs to the PlsX family. Homodimer. Probably interacts with PlsY.

It localises to the cytoplasm. It catalyses the reaction a fatty acyl-[ACP] + phosphate = an acyl phosphate + holo-[ACP]. It functions in the pathway lipid metabolism; phospholipid metabolism. Its function is as follows. Catalyzes the reversible formation of acyl-phosphate (acyl-PO(4)) from acyl-[acyl-carrier-protein] (acyl-ACP). This enzyme utilizes acyl-ACP as fatty acyl donor, but not acyl-CoA. This is Phosphate acyltransferase from Caldicellulosiruptor bescii (strain ATCC BAA-1888 / DSM 6725 / KCTC 15123 / Z-1320) (Anaerocellum thermophilum).